Here is a 302-residue protein sequence, read N- to C-terminus: uncharacterized protein (302 aa).

This is an uncharacterized protein from Haemophilus influenzae (strain ATCC 51907 / DSM 11121 / KW20 / Rd).